Consider the following 876-residue polypeptide: Phosphoenolpyruvate carboxylase (876 aa).

Catalysis depends on residues H138 and K543.

This sequence belongs to the PEPCase type 1 family. It depends on Mg(2+) as a cofactor.

The catalysed reaction is oxaloacetate + phosphate = phosphoenolpyruvate + hydrogencarbonate. Its function is as follows. Forms oxaloacetate, a four-carbon dicarboxylic acid source for the tricarboxylic acid cycle. The sequence is that of Phosphoenolpyruvate carboxylase from Aliivibrio salmonicida (strain LFI1238) (Vibrio salmonicida (strain LFI1238)).